Consider the following 289-residue polypeptide: Protease HtpX homolog (289 aa).

2 helical membrane-spanning segments follow: residues threonine 9 to glycine 29 and glycine 31 to serine 51. Residue histidine 133 coordinates Zn(2+). Glutamate 134 is a catalytic residue. Histidine 137 lines the Zn(2+) pocket. The next 2 helical transmembrane spans lie at threonine 143–alanine 163 and isoleucine 182–isoleucine 202. Glutamate 207 serves as a coordination point for Zn(2+).

It belongs to the peptidase M48B family. Zn(2+) is required as a cofactor.

It is found in the cell membrane. This Pyrococcus abyssi (strain GE5 / Orsay) protein is Protease HtpX homolog.